Reading from the N-terminus, the 1339-residue chain is Transcription factor tau subunit sfc3 (1339 aa).

The interval 470-515 is disordered; it reads MESNAEVSPDGMTLLPRKRGRPRKSANISVTSSPIRPSKNENNLPS. A DNA-binding region (a.T hook) is located at residues 485-497; the sequence is PRKRGRPRKSANI. Over residues 495–514 the composition is skewed to polar residues; sequence ANISVTSSPIRPSKNENNLP. S595 and S596 each carry phosphoserine. A disordered region spans residues 791-826; it reads RRKSMPAEIKRHKESSETKPVDKEEVKKNEKEKDDP. The segment covering 798-826 has biased composition (basic and acidic residues); the sequence is EIKRHKESSETKPVDKEEVKKNEKEKDDP.

As to quaternary structure, component of the TFIIIC complex including sfc1, sfc3, sfc4, sfc6 and sfc7. The subunits are organized in two globular domains, tauA and tauB, connected by a proteolysis-sensitive and flexible linker. Interacts with sfc1, sfc4 and sfc6.

It is found in the nucleus envelope. In terms of biological role, TFIIIC mediates tRNA and 5S RNA gene activation by binding to intragenic promoter elements. Upstream of the transcription start site, TFIIIC assembles the initiation complex TFIIIB-TFIIIC-tDNA, which is sufficient for RNA polymerase III recruitment and function. Part of the tauB domain of TFIIIC that binds boxB DNA promoter sites of tRNA and similar genes. Cooperates with sfc6 in DNA binding. Localizes to chromatin insulator sequence without recruiting RNA polymerase III and plays a role in nuclear organization. The sequence is that of Transcription factor tau subunit sfc3 from Schizosaccharomyces pombe (strain 972 / ATCC 24843) (Fission yeast).